Consider the following 232-residue polypeptide: MQNFFALIPAAGSGSRMGDRMPKQYLTLAGKPMIHHALATLCNSPRLSRVFVVLSPGDVEWARHDWSEFSSKLSMLECGGATRAETVLNGLKAAQEGTAIEDDDWVLVHDAARPCLGGKLLDKLMDELEEDEVGGLLAVPVADTLKRSDPTCRAERTEPREGLWQAQTPQMFRYRTLVNALSGAGGVTMTDDAGAIEALGLRPKLVVSDARNLKVTYPQDLALAELILKNCK.

Belongs to the IspD/TarI cytidylyltransferase family. IspD subfamily.

The enzyme catalyses 2-C-methyl-D-erythritol 4-phosphate + CTP + H(+) = 4-CDP-2-C-methyl-D-erythritol + diphosphate. It participates in isoprenoid biosynthesis; isopentenyl diphosphate biosynthesis via DXP pathway; isopentenyl diphosphate from 1-deoxy-D-xylulose 5-phosphate: step 2/6. Catalyzes the formation of 4-diphosphocytidyl-2-C-methyl-D-erythritol from CTP and 2-C-methyl-D-erythritol 4-phosphate (MEP). The chain is 2-C-methyl-D-erythritol 4-phosphate cytidylyltransferase from Nitrosospira multiformis (strain ATCC 25196 / NCIMB 11849 / C 71).